The chain runs to 120 residues: UPF0145 protein Bcenmc03_5217 (120 aa).

The protein belongs to the UPF0145 family.

This chain is UPF0145 protein Bcenmc03_5217, found in Burkholderia orbicola (strain MC0-3).